The following is a 156-amino-acid chain: Putative HTH-type transcriptional regulator YffB (156 aa).

In terms of domain architecture, HTH rrf2-type spans 2 to 137 (KLSSGWEQSV…SNVSLAQVAD (136 aa)).

The polypeptide is Putative HTH-type transcriptional regulator YffB (yffB) (Lactococcus lactis subsp. lactis (strain IL1403) (Streptococcus lactis)).